We begin with the raw amino-acid sequence, 245 residues long: Orotidine 5'-phosphate decarboxylase (245 aa).

Residues D22, K44, 71–80, T131, R192, Q201, G221, and R222 each bind substrate; that span reads DLKFHDIPNT. K73 acts as the Proton donor in catalysis.

It belongs to the OMP decarboxylase family. Type 1 subfamily. In terms of assembly, homodimer.

The enzyme catalyses orotidine 5'-phosphate + H(+) = UMP + CO2. It functions in the pathway pyrimidine metabolism; UMP biosynthesis via de novo pathway; UMP from orotate: step 2/2. Its function is as follows. Catalyzes the decarboxylation of orotidine 5'-monophosphate (OMP) to uridine 5'-monophosphate (UMP). In Salmonella choleraesuis (strain SC-B67), this protein is Orotidine 5'-phosphate decarboxylase.